A 375-amino-acid chain; its full sequence is MKWLSRILTVIVAMSMACGALIFNRRHQLKAKTLNFNHKSLTIIIPARNEEKRIGHLLHSIIQQQVPVDVIVMNDGSTDETARVARSYGATVVDVVDDADGKWYGKSHACYQGVTHACTNRIAFVDADVTFLRKDAVETLINQYQLQGEKGLLSVQPYHITKRFYEGFSAIFNLMTVVGMNVFSTLDDGRTNQHAFGPVTLTNKEDYYATGGHKSANRHIIEGFALGSAYTSQSLPVTVYEGFPFVAFCMYQEGFQSLQEGWTKHLSTGAGGTKPKIMAAIVLWLFGSIASILGLCLSLKYRQMSVGKMLTVYLSYTTQFIYLHRRVGQFSNLLMVCHPLLFMFFTKIFIQSWKQTHRYGVVEWKGRQYSISKEQ.

Helical transmembrane passes span 3–23, 164–184, 277–297, and 330–350; these read WLSRILTVIVAMSMACGALIF, FYEGFSAIFNLMTVVGMNVFS, IMAAIVLWLFGSIASILGLCL, and FSNLLMVCHPLLFMFFTKIFI.

Belongs to the glycosyltransferase 2 family. CrtQ subfamily.

The protein resides in the cell membrane. Its pathway is carotenoid biosynthesis; staphyloxanthin biosynthesis; staphyloxanthin from farnesyl diphosphate: step 4/5. In terms of biological role, catalyzes the glycosylation of 4,4'-diaponeurosporenoate, i.e. the esterification of glucose at the C1'' position with the carboxyl group of 4,4'-diaponeurosporenic acid, to form glycosyl-4,4'-diaponeurosporenoate. This is a step in the biosynthesis of staphyloxanthin, an orange pigment present in most staphylococci strains. This Staphylococcus aureus (strain bovine RF122 / ET3-1) protein is 4,4'-diaponeurosporenoate glycosyltransferase (crtQ).